Here is a 137-residue protein sequence, read N- to C-terminus: Large ribosomal subunit protein eL28 (137 aa).

Serine 2 carries the post-translational modification N-acetylserine. Residues lysine 58 and lysine 65 each participate in a glycyl lysine isopeptide (Lys-Gly) (interchain with G-Cter in SUMO2) cross-link. Serine 115 bears the Phosphoserine mark.

It belongs to the eukaryotic ribosomal protein eL28 family. Component of the large ribosomal subunit.

It is found in the cytoplasm. Its function is as follows. Component of the large ribosomal subunit. The ribosome is a large ribonucleoprotein complex responsible for the synthesis of proteins in the cell. The protein is Large ribosomal subunit protein eL28 (RPL28) of Bos taurus (Bovine).